A 211-amino-acid polypeptide reads, in one-letter code: MMEEITALVRETRTETGKPALDERVMAVMGKVPRHEFVPADQLPRAYQNRPLPIGHGQTISQPYIVALMTDLARVEPGHKVLEVGTGSGYQAAVMAHLARAVYTIEIIEPLGLQARQRLQKLGYDNVQVRLGDGYHGWEEHAPYDAILVTAAASHIPPPLIRQLKAGGRMVIPVGAAFMVQQLMLVEKNRDGTVSTRQILPVAFVPLTGQR.

The active site involves S61.

This sequence belongs to the methyltransferase superfamily. L-isoaspartyl/D-aspartyl protein methyltransferase family.

The protein localises to the cytoplasm. The catalysed reaction is [protein]-L-isoaspartate + S-adenosyl-L-methionine = [protein]-L-isoaspartate alpha-methyl ester + S-adenosyl-L-homocysteine. In terms of biological role, catalyzes the methyl esterification of L-isoaspartyl residues in peptides and proteins that result from spontaneous decomposition of normal L-aspartyl and L-asparaginyl residues. It plays a role in the repair and/or degradation of damaged proteins. The chain is Protein-L-isoaspartate O-methyltransferase 2 from Polaromonas sp. (strain JS666 / ATCC BAA-500).